The chain runs to 578 residues: Probable cytochrome c oxidase subunit 1-alpha (578 aa).

The disordered stretch occupies residues 1-21 (MSILNEPQGASAAEDSYENEL). The chain crosses the membrane as a helical span at residues 44–64 (IGTMYLVTSFAFFVIGGVMAL). H90 is a binding site for Fe(II)-heme a. Transmembrane regions (helical) follow at residues 93 to 113 (IMLL…IMPL), 125 to 145 (LNMF…GGFL), 174 to 194 (LWIM…VNFI), 217 to 237 (VLLT…ALFA), 262 to 282 (LFWF…FGIV), and 294 to 314 (IFGY…SVTV). Cu cation-binding residues include H268 and Y272. The 1'-histidyl-3'-tyrosine (His-Tyr) cross-link spans 268-272 (HPEVY). Cu cation is bound by residues H317 and H318. The next 2 membrane-spanning stretches (helical) occupy residues 319–339 (MYVT…LIAV) and 363–383 (MLWS…GVIL). H401 lines the heme a3 pocket. Transmembrane regions (helical) follow at residues 402-422 (FHYV…HFWW), 437-457 (ITFW…HWLG), and 480-500 (ISTI…YNIW). Residue H403 coordinates Fe(II)-heme a.

This sequence belongs to the heme-copper respiratory oxidase family. Associates with subunits II, III and IV to form cytochrome c oxidase. Cu(2+) is required as a cofactor. The cofactor is heme.

The protein resides in the cell membrane. The catalysed reaction is 4 Fe(II)-[cytochrome c] + O2 + 8 H(+)(in) = 4 Fe(III)-[cytochrome c] + 2 H2O + 4 H(+)(out). Its pathway is energy metabolism; oxidative phosphorylation. Cytochrome c oxidase is the component of the respiratory chain that catalyzes the reduction of oxygen to water. Subunits 1-3 form the functional core of the enzyme complex. CO I is the catalytic subunit of the enzyme. Electrons originating in cytochrome c are transferred via the copper A center of subunit 2 and heme A of subunit 1 to the bimetallic center formed by heme A3 and copper B. This chain is Probable cytochrome c oxidase subunit 1-alpha (ctaD1), found in Streptomyces coelicolor (strain ATCC BAA-471 / A3(2) / M145).